A 307-amino-acid chain; its full sequence is Elongation factor Ts (307 aa).

Residues 80–83 are involved in Mg(2+) ion dislocation from EF-Tu; the sequence is TDFV.

It belongs to the EF-Ts family.

The protein resides in the cytoplasm. In terms of biological role, associates with the EF-Tu.GDP complex and induces the exchange of GDP to GTP. It remains bound to the aminoacyl-tRNA.EF-Tu.GTP complex up to the GTP hydrolysis stage on the ribosome. In Xanthobacter autotrophicus (strain ATCC BAA-1158 / Py2), this protein is Elongation factor Ts.